Consider the following 487-residue polypeptide: N-succinylglutamate 5-semialdehyde dehydrogenase (487 aa).

Residue Gly-221–Gly-226 participates in NAD(+) binding. Residues Glu-244 and Cys-278 contribute to the active site.

Belongs to the aldehyde dehydrogenase family. AstD subfamily.

The catalysed reaction is N-succinyl-L-glutamate 5-semialdehyde + NAD(+) + H2O = N-succinyl-L-glutamate + NADH + 2 H(+). It participates in amino-acid degradation; L-arginine degradation via AST pathway; L-glutamate and succinate from L-arginine: step 4/5. Catalyzes the NAD-dependent reduction of succinylglutamate semialdehyde into succinylglutamate. In Burkholderia lata (strain ATCC 17760 / DSM 23089 / LMG 22485 / NCIMB 9086 / R18194 / 383), this protein is N-succinylglutamate 5-semialdehyde dehydrogenase.